A 129-amino-acid polypeptide reads, in one-letter code: MAKTILAARKHIKKQVVDGIAHIHASFNNTIVTITDRQGNTLGWATAGNSGFRGSRKSTPFAAQVAAERCAEAVKDYGIKNLEVMVKGPGPGRESTVRALNAAGFRITNITDVTPIPHNGCRPPKKRRV.

It belongs to the universal ribosomal protein uS11 family. As to quaternary structure, part of the 30S ribosomal subunit. Interacts with proteins S7 and S18. Binds to IF-3.

In terms of biological role, located on the platform of the 30S subunit, it bridges several disparate RNA helices of the 16S rRNA. Forms part of the Shine-Dalgarno cleft in the 70S ribosome. This Baumannia cicadellinicola subsp. Homalodisca coagulata protein is Small ribosomal subunit protein uS11.